Reading from the N-terminus, the 614-residue chain is 2-succinyl-5-enolpyruvyl-6-hydroxy-3-cyclohexene-1-carboxylate synthase (614 aa).

This sequence belongs to the TPP enzyme family. MenD subfamily. Homodimer. Requires Mg(2+) as cofactor. Mn(2+) serves as cofactor. It depends on thiamine diphosphate as a cofactor.

It carries out the reaction isochorismate + 2-oxoglutarate + H(+) = 5-enolpyruvoyl-6-hydroxy-2-succinyl-cyclohex-3-ene-1-carboxylate + CO2. It participates in quinol/quinone metabolism; 1,4-dihydroxy-2-naphthoate biosynthesis; 1,4-dihydroxy-2-naphthoate from chorismate: step 2/7. Its pathway is quinol/quinone metabolism; menaquinone biosynthesis. Its function is as follows. Catalyzes the thiamine diphosphate-dependent decarboxylation of 2-oxoglutarate and the subsequent addition of the resulting succinic semialdehyde-thiamine pyrophosphate anion to isochorismate to yield 2-succinyl-5-enolpyruvyl-6-hydroxy-3-cyclohexene-1-carboxylate (SEPHCHC). The polypeptide is 2-succinyl-5-enolpyruvyl-6-hydroxy-3-cyclohexene-1-carboxylate synthase (Sorangium cellulosum (strain So ce56) (Polyangium cellulosum (strain So ce56))).